We begin with the raw amino-acid sequence, 147 residues long: Hemoglobin subunit gamma-2 (147 aa).

One can recognise a Globin domain in the interval 3 to 147; sequence NFTAEDKAAI…VASALGSRYH (145 aa). T13 carries the phosphothreonine modification. 3 positions are modified to phosphoserine: S45, S51, and S53. N6-acetyllysine is present on K60. H64 contacts heme b. K83 is subject to N6-acetyllysine. H93 serves as a coordination point for heme b. Position 94 is an S-nitrosocysteine (C94). Phosphoserine is present on residues S140 and S144.

Belongs to the globin family. In terms of assembly, heterotetramer of two alpha chains and two gamma chains in fetal hemoglobin (Hb F). Red blood cells.

Functionally, gamma chains make up the fetal hemoglobin F, in combination with alpha chains. The polypeptide is Hemoglobin subunit gamma-2 (HBG2) (Cebus albifrons (White-fronted capuchin)).